A 467-amino-acid polypeptide reads, in one-letter code: Protein PHOSPHATE STARVATION RESPONSE 3 (467 aa).

A disordered region spans residues 227-266; it reads MSLPVSSCSDQEDLQDARSPAKVQLSSSRSSSGTASCNKP. The HTH myb-type domain occupies 262–322; it reads SCNKPRLRWT…HLQKYRLAKY (61 aa). Positions 293–318 form a DNA-binding region, H-T-H motif; the sequence is PKGVLKLMKVEGLTIYHIKSHLQKYR. Basic and acidic residues predominate over residues 327–337; the sequence is KEDKKQEEKKT. Disordered regions lie at residues 327–353 and 400–467; these read KEDK…KSAQ and RESI…VHDE. Residues 402-412 show a composition bias toward polar residues; sequence SISSMTSTTEG. Composition is skewed to basic and acidic residues over residues 419–428 and 438–467; these read PMEKTEDKAE and RITD…VHDE.

The protein resides in the nucleus. Its function is as follows. Transcription factor involved in phosphate starvation signaling. Binds to P1BS, an imperfect palindromic sequence 5'-GNATATNC-3', to promote the expression of inorganic phosphate (Pi) starvation-responsive genes. Functionally redundant with PHR1 and PHR2 in regulating Pi starvation response and Pi homeostasis. The polypeptide is Protein PHOSPHATE STARVATION RESPONSE 3 (Oryza sativa subsp. indica (Rice)).